A 229-amino-acid polypeptide reads, in one-letter code: 2-phytyl-1,4-naphtoquinone methyltransferase (229 aa).

The protein belongs to the class I-like SAM-binding methyltransferase superfamily. MenG/UbiE family.

It catalyses the reaction demethylphylloquinol + S-adenosyl-L-methionine = phylloquinol + S-adenosyl-L-homocysteine + H(+). Its pathway is cofactor biosynthesis; phylloquinone biosynthesis. In terms of biological role, methyltransferase required for the conversion of 2-phytyl-1,4-beta-naphthoquinol to phylloquinol. The sequence is that of 2-phytyl-1,4-naphtoquinone methyltransferase from Nostoc sp. (strain PCC 7120 / SAG 25.82 / UTEX 2576).